The following is a 243-amino-acid chain: Probable transcriptional regulatory protein BPP2422 (243 aa).

The disordered stretch occupies residues 1 to 21; sequence MAGHSKWANIQHRKGRQDAKR.

It belongs to the TACO1 family.

The protein resides in the cytoplasm. This is Probable transcriptional regulatory protein BPP2422 from Bordetella parapertussis (strain 12822 / ATCC BAA-587 / NCTC 13253).